The chain runs to 146 residues: Large ribosomal subunit protein uL15 (146 aa).

Residues 1–53 (MILSNLKPVPGARHSKKRLGRGPGSGTGKTSGKGHKGQKARSGGGVRPGFEGG) are disordered. 2 stretches are compositionally biased toward gly residues: residues 21–31 (RGPGSGTGKTS) and 42–52 (SGGGVRPGFEG).

This sequence belongs to the universal ribosomal protein uL15 family. In terms of assembly, part of the 50S ribosomal subunit.

Its function is as follows. Binds to the 23S rRNA. The sequence is that of Large ribosomal subunit protein uL15 from Acholeplasma laidlawii (strain PG-8A).